We begin with the raw amino-acid sequence, 289 residues long: Diaminopimelate epimerase (289 aa).

Asn-17, Gln-47, and Asn-67 together coordinate substrate. Catalysis depends on Cys-76, which acts as the Proton donor. Substrate contacts are provided by residues 77–78 (GN), Asn-164, Asn-198, and 216–217 (ER). Catalysis depends on Cys-225, which acts as the Proton acceptor. 226-227 (GS) provides a ligand contact to substrate.

It belongs to the diaminopimelate epimerase family. Homodimer.

It is found in the cytoplasm. It catalyses the reaction (2S,6S)-2,6-diaminopimelate = meso-2,6-diaminopimelate. The protein operates within amino-acid biosynthesis; L-lysine biosynthesis via DAP pathway; DL-2,6-diaminopimelate from LL-2,6-diaminopimelate: step 1/1. Catalyzes the stereoinversion of LL-2,6-diaminopimelate (L,L-DAP) to meso-diaminopimelate (meso-DAP), a precursor of L-lysine and an essential component of the bacterial peptidoglycan. This chain is Diaminopimelate epimerase, found in Bradyrhizobium sp. (strain ORS 278).